We begin with the raw amino-acid sequence, 654 residues long: Beta-galactosidase-1-like protein (654 aa).

The N-terminal stretch at 1 to 27 is a signal peptide; that stretch reads MAPKKPSCLRSLLLPLSLTLLLPQADT. Residue Asn97 is glycosylated (N-linked (GlcNAc...) asparagine). The active-site Proton donor is Glu186. Residue Asn243 is glycosylated (N-linked (GlcNAc...) asparagine). Glu264 serves as the catalytic Nucleophile.

It belongs to the glycosyl hydrolase 35 family.

The protein resides in the secreted. Its function is as follows. Probable glycosyl hydrolase. The polypeptide is Beta-galactosidase-1-like protein (GLB1L) (Macaca fascicularis (Crab-eating macaque)).